An 803-amino-acid chain; its full sequence is Translation initiation factor IF-2 (803 aa).

Disordered stretches follow at residues 95-125 and 138-178; these read PVVE…EKAE and EVKE…EREE. The span at 111–121 shows a compositional bias: polar residues; it reads VPLTSDTTNLN. Residues 138-155 are compositionally biased toward basic and acidic residues; the sequence is EVKEEAKKTPSEKKETPK. A compositionally biased stretch (basic residues) spans 156-167; sequence KGPRKETRRSRK. Residues 168 to 178 are compositionally biased toward basic and acidic residues; the sequence is PDKEDKWEREE. Positions 302-471 constitute a tr-type G domain; it reads PRAPVVTIMG…LLQAEVLELK (170 aa). Residues 311 to 318 form a G1 region; sequence GHVDHGKT. 311-318 contributes to the GTP binding site; that stretch reads GHVDHGKT. The G2 stretch occupies residues 336–340; the sequence is GITQH. The G3 stretch occupies residues 357 to 360; that stretch reads DTPG. GTP contacts are provided by residues 357 to 361 and 411 to 414; these read DTPGH and NKID. The segment at 411-414 is G4; sequence NKID. The G5 stretch occupies residues 447–449; the sequence is SAK.

Belongs to the TRAFAC class translation factor GTPase superfamily. Classic translation factor GTPase family. IF-2 subfamily.

It is found in the cytoplasm. In terms of biological role, one of the essential components for the initiation of protein synthesis. Protects formylmethionyl-tRNA from spontaneous hydrolysis and promotes its binding to the 30S ribosomal subunits. Also involved in the hydrolysis of GTP during the formation of the 70S ribosomal complex. This Coxiella burnetii (strain Dugway 5J108-111) protein is Translation initiation factor IF-2.